Here is a 411-residue protein sequence, read N- to C-terminus: Argininosuccinate synthase (411 aa).

ATP contacts are provided by residues 11-19 and Ala-37; that span reads AYSGGLDTS. Residues Tyr-88 and Ser-93 each coordinate L-citrulline. 116 to 124 serves as a coordination point for ATP; that stretch reads SHGATGKGN. Residues Thr-120, Asn-124, and Asp-125 each contribute to the L-aspartate site. Asn-124 is an L-citrulline binding site. L-citrulline contacts are provided by Arg-128, Ser-181, Ser-190, Glu-271, and Tyr-283.

Belongs to the argininosuccinate synthase family. In terms of assembly, homotetramer.

The protein resides in the cytoplasm. The protein localises to the cytosol. It catalyses the reaction L-citrulline + L-aspartate + ATP = 2-(N(omega)-L-arginino)succinate + AMP + diphosphate + H(+). It participates in amino-acid biosynthesis; L-arginine biosynthesis; L-arginine from L-ornithine and carbamoyl phosphate: step 2/3. The protein operates within nitrogen metabolism; urea cycle; (N(omega)-L-arginino)succinate from L-aspartate and L-citrulline: step 1/1. One of the enzymes of the urea cycle, the metabolic pathway transforming neurotoxic amonia produced by protein catabolism into inocuous urea in the liver of ureotelic animals. Catalyzes the formation of arginosuccinate from aspartate, citrulline and ATP and together with ASL it is responsible for the biosynthesis of arginine in most body tissues. The polypeptide is Argininosuccinate synthase (Xenopus laevis (African clawed frog)).